Consider the following 394-residue polypeptide: MGLLQEKLAKYDLPQKFMAQGVYPYFREIEGKQGTEVEMGGQHVLMFGSNAYTGLTGDERVIEAGIKAMRKYGSGCAGSRFLNGTLDLHVQLEKELAAFVGKDEALCFSTGFTVNSGVISCLTDRNDYIICDDRDHASIVDGRRLSFSQQLKYKHNDMADLEKQLQKCNPDSVKLIIVDGVFSMEGDLANLPEIVRLKHKYNATIMVDEAHGLGVFGKQGRGVCDHFGLTHEVDLIMGTFSKSLASIGGFIAADSSIINWLRHNARTYIFSASNTPAATAAALEALHIIQNEPERLNALWEATNYALRRFREAGFEIGATESPIIPLYVRDTEKTFMVTKLAFDEGVFINPVIPPACAPQDTLVRVALMATHTKEQIDSAVEKLVKAFKALDLL.

Residues 111–112 (GF), S183, H211, and T239 contribute to the pyridoxal 5'-phosphate site. K242 bears the N6-(pyridoxal phosphate)lysine mark.

Belongs to the class-II pyridoxal-phosphate-dependent aminotransferase family. Requires pyridoxal 5'-phosphate as cofactor.

It catalyses the reaction L-serine + hexadecanoyl-CoA + H(+) = 3-oxosphinganine + CO2 + CoA. The protein operates within lipid metabolism; sphingolipid metabolism. Its function is as follows. Involved in de novo bacterial ceramide synthesis. Catalyzes the condensation of L-serine with palmitoyl-CoA (hexadecanoyl-CoA) to produce 3-oxosphinganine. Also capable of using alanine as substrate leading to the formation of 1-deoxysphinganine (1-deoxySa). Contributes to the levels of endogenous sphingolipids in its host. This chain is Serine palmitoyltransferase, found in Bacteroides thetaiotaomicron (strain ATCC 29148 / DSM 2079 / JCM 5827 / CCUG 10774 / NCTC 10582 / VPI-5482 / E50).